Consider the following 75-residue polypeptide: Protease B inhibitor 1 (75 aa).

The residue at position 74 (Thr74) is a Phosphothreonine.

This sequence belongs to the protease inhibitor I9 family. Part of the heterodimeric LMA1 complex together with the thioredoxin II/TRX2. LMA1 binds to the ATPase SEC18.

It is found in the cytoplasm. The protein localises to the nucleus. Cytosolic inhibitor of vacuolar proteinase B (yscB), probably regulating protease B activity during limited proteolysis. PBI2 is a component of the LMA1 complex, which is involved in the facilitation of vesicle fusion such as homotypic vacuole and ER-derived COPII vesicle fusion with the Golgi. The protein is Protease B inhibitor 1 (PBI2) of Saccharomyces cerevisiae (Baker's yeast).